We begin with the raw amino-acid sequence, 232 residues long: Phosphatidylserine decarboxylase proenzyme (232 aa).

Ser-190 functions as the Schiff-base intermediate with substrate; via pyruvic acid in the catalytic mechanism. Pyruvic acid (Ser); by autocatalysis is present on Ser-190.

This sequence belongs to the phosphatidylserine decarboxylase family. PSD-A subfamily. In terms of assembly, heterodimer of a large membrane-associated beta subunit and a small pyruvoyl-containing alpha subunit. Requires pyruvate as cofactor. Post-translationally, is synthesized initially as an inactive proenzyme. Formation of the active enzyme involves a self-maturation process in which the active site pyruvoyl group is generated from an internal serine residue via an autocatalytic post-translational modification. Two non-identical subunits are generated from the proenzyme in this reaction, and the pyruvate is formed at the N-terminus of the alpha chain, which is derived from the carboxyl end of the proenzyme. The post-translation cleavage follows an unusual pathway, termed non-hydrolytic serinolysis, in which the side chain hydroxyl group of the serine supplies its oxygen atom to form the C-terminus of the beta chain, while the remainder of the serine residue undergoes an oxidative deamination to produce ammonia and the pyruvoyl prosthetic group on the alpha chain.

The protein resides in the cell membrane. The enzyme catalyses a 1,2-diacyl-sn-glycero-3-phospho-L-serine + H(+) = a 1,2-diacyl-sn-glycero-3-phosphoethanolamine + CO2. It participates in phospholipid metabolism; phosphatidylethanolamine biosynthesis; phosphatidylethanolamine from CDP-diacylglycerol: step 2/2. In terms of biological role, catalyzes the formation of phosphatidylethanolamine (PtdEtn) from phosphatidylserine (PtdSer). The protein is Phosphatidylserine decarboxylase proenzyme of Agrobacterium fabrum (strain C58 / ATCC 33970) (Agrobacterium tumefaciens (strain C58)).